We begin with the raw amino-acid sequence, 308 residues long: Zinc finger protein unc-98 (308 aa).

2 consecutive C2H2-type zinc fingers follow at residues 111 to 133 and 139 to 161; these read YKCR…ERIH and YVCG…AAQH. The C2H2-type 3; degenerate zinc finger occupies 166-186; it reads GFKCDCGRTFFSYTEMLYHKH. The C2H2-type 4 zinc-finger motif lies at 244–266; the sequence is YICEYCSKSYSDSRGLAYHMYSH.

The protein resides in the nucleus. Its subcellular location is the cytoplasm. Functionally, probable transcription factor. Required for muscle structure. Its dual subcellular localization suggests that it may function both as a muscle adhesion complex protein and as a transcription factor, or work together with transcription factors, to influence gene expression. Thought to act as a molecular bridge between unc-97 and mhc-a at the M-line of muscles, possibly in a signaling role. The polypeptide is Zinc finger protein unc-98 (Caenorhabditis briggsae).